Reading from the N-terminus, the 253-residue chain is 2,3-bisphosphoglycerate-dependent phosphoglycerate mutase (253 aa).

Substrate-binding positions include 12 to 19 (RHGESEWN), 25 to 26 (TG), Arg-64, 91 to 94 (ERHY), Lys-102, 118 to 119 (RR), and 187 to 188 (GN). The active-site Tele-phosphohistidine intermediate is the His-13. Glu-91 acts as the Proton donor/acceptor in catalysis.

Belongs to the phosphoglycerate mutase family. BPG-dependent PGAM subfamily.

It carries out the reaction (2R)-2-phosphoglycerate = (2R)-3-phosphoglycerate. It participates in carbohydrate degradation; glycolysis; pyruvate from D-glyceraldehyde 3-phosphate: step 3/5. Its function is as follows. Catalyzes the interconversion of 2-phosphoglycerate and 3-phosphoglycerate. The protein is 2,3-bisphosphoglycerate-dependent phosphoglycerate mutase of Streptomyces griseus subsp. griseus (strain JCM 4626 / CBS 651.72 / NBRC 13350 / KCC S-0626 / ISP 5235).